We begin with the raw amino-acid sequence, 202 residues long: GTP cyclohydrolase 1 (202 aa).

Zn(2+) contacts are provided by cysteine 90, histidine 93, and cysteine 163.

This sequence belongs to the GTP cyclohydrolase I family. Homomer.

It catalyses the reaction GTP + H2O = 7,8-dihydroneopterin 3'-triphosphate + formate + H(+). The protein operates within cofactor biosynthesis; 7,8-dihydroneopterin triphosphate biosynthesis; 7,8-dihydroneopterin triphosphate from GTP: step 1/1. This chain is GTP cyclohydrolase 1, found in Mycobacterium ulcerans (strain Agy99).